Reading from the N-terminus, the 368-residue chain is Agmatine deiminase (368 aa).

Catalysis depends on Cys357, which acts as the Amidino-cysteine intermediate.

It belongs to the agmatine deiminase family. In terms of assembly, homodimer.

The enzyme catalyses agmatine + H2O = N-carbamoylputrescine + NH4(+). It functions in the pathway amine and polyamine biosynthesis; putrescine biosynthesis via agmatine pathway; N-carbamoylputrescine from agmatine: step 1/1. Functionally, mediates the hydrolysis of agmatine into N-carbamoylputrescine in the arginine decarboxylase (ADC) pathway of putrescine biosynthesis, a basic polyamine. The polypeptide is Agmatine deiminase (Pseudomonas fluorescens (strain SBW25)).